A 468-amino-acid polypeptide reads, in one-letter code: Alcohol dehydrogenase (quinone), cytochrome c subunit (468 aa).

Residues 1 to 23 (MINRLKVTFSAAAFSLLAGTALA) form the signal peptide. 3 Cytochrome c domains span residues 31–134 (ALVQ…MHGV), 178–293 (PEIA…KSLP), and 317–407 (TASV…RTSW). Cys45, Cys48, His49, Cys193, Cys196, His197, Cys330, Cys333, and His334 together coordinate heme c.

The alcohol dehydrogenase multicomponent enzyme system is composed of a dehydrogenase subunit I (AdhA) and a cytochrome c subunit II (AdhB). The cofactor is heme c.

It localises to the cell membrane. The catalysed reaction is ethanol + a ubiquinone = a ubiquinol + acetaldehyde. Its function is as follows. Cytochrome c component of the alcohol dehydrogenase multicomponent enzyme system which is involved in the production of acetic acid and in the ethanol oxidase respiratory chain. Quinohemoprotein alcohol dehydrogenase (ADH) catalyzes the oxidation of ethanol to acetaldehyde by transferring electrons to the ubiquinone embedded in the membrane phospholipids. The electrons transfer from ethanol to membranous ubiquinone occurs from pyrroloquinoline quinone (PQQ) to one heme c in subunit I (AdhA), and finally to two heme c in subunit II (AdhB). Besides ubiquinone reduction, ADH also has a ubiquinol (QH2) oxidation reaction which mediates electron transfer from ubiquinol to the non-energy generating bypass oxidase system. The electrons transfer occurs from ubiquinol (QH2) to the additional heme c within subunit II (AdhB). The sequence is that of Alcohol dehydrogenase (quinone), cytochrome c subunit from Gluconacetobacter polyoxogenes (Acetobacter polyoxogenes).